Reading from the N-terminus, the 876-residue chain is Leucine--tRNA ligase (876 aa).

The short motif at P43–H53 is the 'HIGH' region element. The 'KMSKS' region signature appears at K632–S636. K635 is a binding site for ATP.

The protein belongs to the class-I aminoacyl-tRNA synthetase family.

The protein localises to the cytoplasm. The enzyme catalyses tRNA(Leu) + L-leucine + ATP = L-leucyl-tRNA(Leu) + AMP + diphosphate. This Rhizobium etli (strain CIAT 652) protein is Leucine--tRNA ligase.